A 229-amino-acid polypeptide reads, in one-letter code: ATP-dependent dethiobiotin synthetase BioD (229 aa).

12-17 provides a ligand contact to ATP; that stretch reads GVGKTV. Mg(2+) is bound at residue T16. K37 is a catalytic residue. Substrate is bound at residue T41. Residues D53, 112–115, and 201–203 contribute to the ATP site; these read EGAG and PAG. Residues D53 and E112 each contribute to the Mg(2+) site.

Belongs to the dethiobiotin synthetase family. In terms of assembly, homodimer. Requires Mg(2+) as cofactor.

The protein resides in the cytoplasm. It carries out the reaction (7R,8S)-7,8-diammoniononanoate + CO2 + ATP = (4R,5S)-dethiobiotin + ADP + phosphate + 3 H(+). It participates in cofactor biosynthesis; biotin biosynthesis; biotin from 7,8-diaminononanoate: step 1/2. In terms of biological role, catalyzes a mechanistically unusual reaction, the ATP-dependent insertion of CO2 between the N7 and N8 nitrogen atoms of 7,8-diaminopelargonic acid (DAPA, also called 7,8-diammoniononanoate) to form a ureido ring. This chain is ATP-dependent dethiobiotin synthetase BioD, found in Mycobacterium sp. (strain KMS).